A 377-amino-acid chain; its full sequence is Chaperone protein DnaJ (377 aa).

The J domain occupies 5 to 70 (DYYEILGVSK…QKRAAYDQYG (66 aa)). A CR-type zinc finger spans residues 132–210 (GVTKEIRIPT…CHGHGRVEKT (79 aa)). Zn(2+)-binding residues include Cys-145, Cys-148, Cys-162, Cys-165, Cys-184, Cys-187, Cys-198, and Cys-201. CXXCXGXG motif repeat units lie at residues 145–152 (CDVCHGSG), 162–169 (CPTCHGAG), 184–191 (CPHCQGRG), and 198–205 (CNKCHGHG).

It belongs to the DnaJ family. Homodimer. The cofactor is Zn(2+).

The protein localises to the cytoplasm. Participates actively in the response to hyperosmotic and heat shock by preventing the aggregation of stress-denatured proteins and by disaggregating proteins, also in an autonomous, DnaK-independent fashion. Unfolded proteins bind initially to DnaJ; upon interaction with the DnaJ-bound protein, DnaK hydrolyzes its bound ATP, resulting in the formation of a stable complex. GrpE releases ADP from DnaK; ATP binding to DnaK triggers the release of the substrate protein, thus completing the reaction cycle. Several rounds of ATP-dependent interactions between DnaJ, DnaK and GrpE are required for fully efficient folding. Also involved, together with DnaK and GrpE, in the DNA replication of plasmids through activation of initiation proteins. The polypeptide is Chaperone protein DnaJ (Klebsiella pneumoniae subsp. pneumoniae (strain ATCC 700721 / MGH 78578)).